The following is a 37-amino-acid chain: Large ribosomal subunit protein bL36c (37 aa).

Belongs to the bacterial ribosomal protein bL36 family.

The protein localises to the plastid. It is found in the chloroplast. This chain is Large ribosomal subunit protein bL36c, found in Lactuca sativa (Garden lettuce).